The following is a 356-amino-acid chain: Magnesium-protoporphyrin IX monomethyl ester [oxidative] cyclase (356 aa).

The protein belongs to the AcsF family. Fe cation is required as a cofactor.

It carries out the reaction Mg-protoporphyrin IX 13-monomethyl ester + 3 NADPH + 3 O2 + 2 H(+) = 3,8-divinyl protochlorophyllide a + 3 NADP(+) + 5 H2O. It functions in the pathway porphyrin-containing compound metabolism; chlorophyll biosynthesis (light-independent). Its function is as follows. Catalyzes the formation of the isocyclic ring in chlorophyll biosynthesis. Mediates the cyclase reaction, which results in the formation of divinylprotochlorophyllide (Pchlide) characteristic of all chlorophylls from magnesium-protoporphyrin IX 13-monomethyl ester (MgPMME). This Parasynechococcus marenigrum (strain WH8102) protein is Magnesium-protoporphyrin IX monomethyl ester [oxidative] cyclase.